We begin with the raw amino-acid sequence, 942 residues long: Isoleucine--tRNA ligase (942 aa).

The 'HIGH' region signature appears at 58–68 (PYANGDIHLGH). E567 serves as a coordination point for L-isoleucyl-5'-AMP. The short motif at 608–612 (KMSKS) is the 'KMSKS' region element. Residue K611 participates in ATP binding. Positions 905, 908, 925, and 928 each coordinate Zn(2+).

It belongs to the class-I aminoacyl-tRNA synthetase family. IleS type 1 subfamily. In terms of assembly, monomer. Requires Zn(2+) as cofactor.

It localises to the cytoplasm. It carries out the reaction tRNA(Ile) + L-isoleucine + ATP = L-isoleucyl-tRNA(Ile) + AMP + diphosphate. Catalyzes the attachment of isoleucine to tRNA(Ile). As IleRS can inadvertently accommodate and process structurally similar amino acids such as valine, to avoid such errors it has two additional distinct tRNA(Ile)-dependent editing activities. One activity is designated as 'pretransfer' editing and involves the hydrolysis of activated Val-AMP. The other activity is designated 'posttransfer' editing and involves deacylation of mischarged Val-tRNA(Ile). The protein is Isoleucine--tRNA ligase of Pseudoalteromonas translucida (strain TAC 125).